Consider the following 210-residue polypeptide: Probable GTP-binding protein EngB (210 aa).

The EngB-type G domain occupies 25-199 (TGIEVAFAGR…RQKLDTWFSE (175 aa)). GTP is bound by residues 33 to 40 (GRSNAGKS), 60 to 64 (GRTQL), 78 to 81 (DLPG), 145 to 148 (TKAD), and 178 to 180 (FSS). Mg(2+)-binding residues include Ser-40 and Thr-62.

Belongs to the TRAFAC class TrmE-Era-EngA-EngB-Septin-like GTPase superfamily. EngB GTPase family. Requires Mg(2+) as cofactor.

Its function is as follows. Necessary for normal cell division and for the maintenance of normal septation. The polypeptide is Probable GTP-binding protein EngB (Escherichia coli O6:H1 (strain CFT073 / ATCC 700928 / UPEC)).